The chain runs to 106 residues: MNDSEFHQLADQLILYIEGQLDNYDGNADIDCETNGGVMTLSFDNDSKIIINRQEPFHQIWLATKGGGYHFDYKEGQWICDRSGDNFLTMLAYAITEQSGEQFSFP.

Belongs to the frataxin family.

In terms of biological role, involved in iron-sulfur (Fe-S) cluster assembly. May act as a regulator of Fe-S biogenesis. This chain is Iron-sulfur cluster assembly protein CyaY, found in Photorhabdus laumondii subsp. laumondii (strain DSM 15139 / CIP 105565 / TT01) (Photorhabdus luminescens subsp. laumondii).